We begin with the raw amino-acid sequence, 329 residues long: Beta-ketoacyl-[acyl-carrier-protein] synthase III (329 aa).

Active-site residues include Cys113 and His255. Positions Gln256–Arg260 are ACP-binding. Residue Asn285 is part of the active site.

It belongs to the thiolase-like superfamily. FabH family. In terms of assembly, homodimer.

Its subcellular location is the cytoplasm. The catalysed reaction is malonyl-[ACP] + acetyl-CoA + H(+) = 3-oxobutanoyl-[ACP] + CO2 + CoA. It functions in the pathway lipid metabolism; fatty acid biosynthesis. In terms of biological role, catalyzes the condensation reaction of fatty acid synthesis by the addition to an acyl acceptor of two carbons from malonyl-ACP. Catalyzes the first condensation reaction which initiates fatty acid synthesis and may therefore play a role in governing the total rate of fatty acid production. Possesses both acetoacetyl-ACP synthase and acetyl transacylase activities. Its substrate specificity determines the biosynthesis of branched-chain and/or straight-chain of fatty acids. The protein is Beta-ketoacyl-[acyl-carrier-protein] synthase III of Chlorobium luteolum (strain DSM 273 / BCRC 81028 / 2530) (Pelodictyon luteolum).